Here is a 359-residue protein sequence, read N- to C-terminus: Peptide chain release factor 1 (359 aa).

Q235 carries the N5-methylglutamine modification. Residues 285–305 form a disordered region; sequence KRDSEISQMRKSQIGSGDRSE. Positions 290–299 are enriched in polar residues; it reads ISQMRKSQIG.

Belongs to the prokaryotic/mitochondrial release factor family. In terms of processing, methylated by PrmC. Methylation increases the termination efficiency of RF1.

The protein localises to the cytoplasm. Functionally, peptide chain release factor 1 directs the termination of translation in response to the peptide chain termination codons UAG and UAA. This is Peptide chain release factor 1 from Ehrlichia canis (strain Jake).